We begin with the raw amino-acid sequence, 155 residues long: Ribosomal RNA large subunit methyltransferase H (155 aa).

Residues Leu73, Gly104, and 123–128 contribute to the S-adenosyl-L-methionine site; that span reads ISKMTF.

Belongs to the RNA methyltransferase RlmH family. In terms of assembly, homodimer.

It localises to the cytoplasm. The catalysed reaction is pseudouridine(1915) in 23S rRNA + S-adenosyl-L-methionine = N(3)-methylpseudouridine(1915) in 23S rRNA + S-adenosyl-L-homocysteine + H(+). In terms of biological role, specifically methylates the pseudouridine at position 1915 (m3Psi1915) in 23S rRNA. In Francisella philomiragia subsp. philomiragia (strain ATCC 25017 / CCUG 19701 / FSC 153 / O#319-036), this protein is Ribosomal RNA large subunit methyltransferase H.